A 464-amino-acid polypeptide reads, in one-letter code: MSSGHIVQIIGAVIDVEFPRDSVPSVYDALLLEGGETTLEVQQQLGDGIVRTIAMGSTEGLKRGLKAENTGKPISVPVGTQTLGRIMDVLGRPIDEQGDIGEEERWAIHRKAPGYADQAASADLLETGIKVIDLICPFAKGGKVGLFGGAGVGKTVNMMELINNIAKEHSGLSVFAGVGERTREGNDFYYEMKESNVLDKVAMVYGQMNEPPGNRLRVALTGLTMAEKFRDEGRDVLLFVDNIYRYTLAGTEVSALLGRMPSAVGYQPTLAEEMGQLQERITSTKTGSITSIQAVYVPADDLTDPSPATTFSHLDATVVLSRDIASKGIYPAIDPLDSTSRQLDPLVIGEQHYNVARGVQNVLQRYKELKDIIAILGMDELSEDDKLIVSRARKIERFLSQPFHVAEVFTGSPGKYVSLKETIASFEGILNGDYDDMPEQAFYMCGGIEEAIEKAKAMKEKEGK.

148-155 (GGAGVGKT) contributes to the ATP binding site.

This sequence belongs to the ATPase alpha/beta chains family. F-type ATPases have 2 components, CF(1) - the catalytic core - and CF(0) - the membrane proton channel. CF(1) has five subunits: alpha(3), beta(3), gamma(1), delta(1), epsilon(1). CF(0) has three main subunits: a(1), b(2) and c(9-12). The alpha and beta chains form an alternating ring which encloses part of the gamma chain. CF(1) is attached to CF(0) by a central stalk formed by the gamma and epsilon chains, while a peripheral stalk is formed by the delta and b chains.

The protein resides in the cell inner membrane. The enzyme catalyses ATP + H2O + 4 H(+)(in) = ADP + phosphate + 5 H(+)(out). Produces ATP from ADP in the presence of a proton gradient across the membrane. The catalytic sites are hosted primarily by the beta subunits. The chain is ATP synthase subunit beta from Marinobacter nauticus (strain ATCC 700491 / DSM 11845 / VT8) (Marinobacter aquaeolei).